The following is a 273-amino-acid chain: Putative ankyrin repeat protein RBE_0317 (273 aa).

ANK repeat units follow at residues 31 to 60 (LGKE…DFYS), 93 to 123 (NGNT…EVNT), 127 to 157 (GGNS…NVNE), 161 to 191 (YGDT…DVNE), and 195 to 225 (QGET…DTKQ).

The chain is Putative ankyrin repeat protein RBE_0317 from Rickettsia bellii (strain RML369-C).